We begin with the raw amino-acid sequence, 255 residues long: Type III pantothenate kinase (255 aa).

6 to 13 is a binding site for ATP; it reads DVGNTNTV. Substrate contacts are provided by residues Tyr100 and 107–110; that span reads GADR. Catalysis depends on Asp109, which acts as the Proton acceptor. Asp129 is a K(+) binding site. Thr132 contributes to the ATP binding site. Position 184 (Thr184) interacts with substrate.

Belongs to the type III pantothenate kinase family. As to quaternary structure, homodimer. The cofactor is NH4(+). K(+) serves as cofactor.

It localises to the cytoplasm. It carries out the reaction (R)-pantothenate + ATP = (R)-4'-phosphopantothenate + ADP + H(+). It participates in cofactor biosynthesis; coenzyme A biosynthesis; CoA from (R)-pantothenate: step 1/5. In terms of biological role, catalyzes the phosphorylation of pantothenate (Pan), the first step in CoA biosynthesis. The chain is Type III pantothenate kinase from Syntrophomonas wolfei subsp. wolfei (strain DSM 2245B / Goettingen).